The sequence spans 682 residues: DNA-directed RNA polymerase subunit beta' (682 aa).

4 residues coordinate Zn(2+): C69, C71, C87, and C90. Positions 489, 491, and 493 each coordinate Mg(2+).

Belongs to the RNA polymerase beta' chain family. RpoC1 subfamily. As to quaternary structure, in plastids the minimal PEP RNA polymerase catalytic core is composed of four subunits: alpha, beta, beta', and beta''. When a (nuclear-encoded) sigma factor is associated with the core the holoenzyme is formed, which can initiate transcription. The cofactor is Mg(2+). Requires Zn(2+) as cofactor.

It is found in the plastid. It localises to the chloroplast. The enzyme catalyses RNA(n) + a ribonucleoside 5'-triphosphate = RNA(n+1) + diphosphate. Functionally, DNA-dependent RNA polymerase catalyzes the transcription of DNA into RNA using the four ribonucleoside triphosphates as substrates. This Oryza nivara (Indian wild rice) protein is DNA-directed RNA polymerase subunit beta'.